The sequence spans 429 residues: Ribosomal RNA small subunit methyltransferase B (429 aa).

S-adenosyl-L-methionine contacts are provided by residues 254–260 (CAAPGGK), Asp277, Asp303, and Asp322. The active-site Nucleophile is the Cys375. The interval 397–419 (ALSETGTPDQPGQQNLPGGEEGD) is disordered. Positions 400–412 (ETGTPDQPGQQNL) are enriched in polar residues.

It belongs to the class I-like SAM-binding methyltransferase superfamily. RsmB/NOP family.

It localises to the cytoplasm. It catalyses the reaction cytidine(967) in 16S rRNA + S-adenosyl-L-methionine = 5-methylcytidine(967) in 16S rRNA + S-adenosyl-L-homocysteine + H(+). In terms of biological role, specifically methylates the cytosine at position 967 (m5C967) of 16S rRNA. In Salmonella heidelberg (strain SL476), this protein is Ribosomal RNA small subunit methyltransferase B.